A 104-amino-acid chain; its full sequence is Naphthalene 1,2-dioxygenase/salicylate 5-hydroxylase systems, ferredoxin component (104 aa).

The 96-residue stretch at 6 to 101 (IDAACLDDIP…VKIENMRVML (96 aa)) folds into the Rieske domain. Cysteine 45, histidine 47, cysteine 64, and histidine 67 together coordinate [2Fe-2S] cluster.

Belongs to the bacterial ring-hydroxylating dioxygenase ferredoxin component family. Ferredoxin NagAb belongs to both the salicylate 5-hydroxylase (S5H) and the naphthalene 1,2-dioxygenase (NDO) multicomponent enzyme systems. The NDO multicomponent enzyme system is composed of an electron transfer component and a dioxygenase component (iron sulfur protein (ISP)). The electron transfer component is composed of a ferredoxin reductase (NagAa) and a ferredoxin (NagAb), and the dioxygenase component is formed by a large alpha subunit (NagAc) and a small beta subunit (NagAd). The S5H multicomponent enzyme system is composed of an electron transfer component and a monooxygenase component. The electron transfer component is composed of a ferredoxin reductase (NagAa) and a ferredoxin (NagAb), and the monooxygenase component is formed by a large subunit (NagG) and a small subunit (NagH). [2Fe-2S] cluster serves as cofactor.

The protein operates within aromatic compound metabolism; naphthalene degradation. In terms of biological role, component of two multicomponent enzyme systems which are involved in the catabolism of naphthalene. Plays a role as an electron transfer component for both salicylate 5-hydroxylase (S5H) and naphthalene 1,2-dioxygenase (NDO) systems, by transferring electrons to the oxygenase components. This Ralstonia sp protein is Naphthalene 1,2-dioxygenase/salicylate 5-hydroxylase systems, ferredoxin component.